The sequence spans 237 residues: Phosphoserine phosphatase (237 aa).

The active-site Nucleophile is aspartate 39. Residues aspartate 39 and glutamate 41 each contribute to the Mg(2+) site. Glutamate 41 (proton donor) is an active-site residue. Substrate is bound by residues glutamate 47, arginine 78, 122–123 (SD), and lysine 165. Aspartate 184 serves as a coordination point for Mg(2+). Substrate is bound at residue asparagine 187.

The protein belongs to the thrH family. Mg(2+) serves as cofactor.

It carries out the reaction O-phospho-L-serine + H2O = L-serine + phosphate. The catalysed reaction is O-phospho-D-serine + H2O = D-serine + phosphate. Its pathway is amino-acid biosynthesis; L-serine biosynthesis; L-serine from 3-phospho-D-glycerate: step 3/3. Phosphoserine phosphatase that mediates dephosphorylation of phosphoserine in the serine biosynthesis pathway. Also able to dephosphorylate phospho-threonine. The polypeptide is Phosphoserine phosphatase (Pseudomonas syringae pv. tomato (strain ATCC BAA-871 / DC3000)).